Consider the following 132-residue polypeptide: Sec-independent protein translocase protein TatB (132 aa).

The chain crosses the membrane as a helical span at residues 2 to 22 (FDGIGFMELLLIGILGLVVLG). Composition is skewed to polar residues over residues 86-95 (LKQAAQSVNR) and 116-132 (IAET…KNNG). A disordered region spans residues 86 to 132 (LKQAAQSVNRPYQLDESNEQEPKIAPPQANIAETPTQSGDTHSKNNG).

It belongs to the TatB family. The Tat system comprises two distinct complexes: a TatABC complex, containing multiple copies of TatA, TatB and TatC subunits, and a separate TatA complex, containing only TatA subunits. Substrates initially bind to the TatABC complex, which probably triggers association of the separate TatA complex to form the active translocon.

It localises to the cell inner membrane. Functionally, part of the twin-arginine translocation (Tat) system that transports large folded proteins containing a characteristic twin-arginine motif in their signal peptide across membranes. Together with TatC, TatB is part of a receptor directly interacting with Tat signal peptides. TatB may form an oligomeric binding site that transiently accommodates folded Tat precursor proteins before their translocation. This is Sec-independent protein translocase protein TatB from Shewanella denitrificans (strain OS217 / ATCC BAA-1090 / DSM 15013).